A 66-amino-acid chain; its full sequence is Stress-associated endoplasmic reticulum protein 1 (66 aa).

Positions 1 to 33 (MVAKQRIRMANEKHSKNITQRGNVAKTSRNAPG) are disordered. Over 1–38 (MVAKQRIRMANEKHSKNITQRGNVAKTSRNAPGEKASV) the chain is Cytoplasmic. The span at 17–30 (NITQRGNVAKTSRN) shows a compositional bias: polar residues. Residues 39 to 59 (GPWLLALFIFVVCGSAIFQII) traverse the membrane as a helical segment. Topologically, residues 60–66 (QSIRMGM) are extracellular.

This sequence belongs to the RAMP4 family. As to quaternary structure, interacts with SEC61B, SEC61A1 and the SEC61 complex. Interacts with CANX.

It localises to the membrane. The protein localises to the endoplasmic reticulum membrane. Its function is as follows. Interacts with target proteins during their translocation into the lumen of the endoplasmic reticulum. Protects unfolded target proteins against degradation during ER stress. May facilitate glycosylation of target proteins after termination of ER stress. May modulate the use of N-glycosylation sites on target proteins. The sequence is that of Stress-associated endoplasmic reticulum protein 1 (SERP1) from Pongo abelii (Sumatran orangutan).